The following is a 164-amino-acid chain: NADH-quinone oxidoreductase subunit I (164 aa).

4Fe-4S ferredoxin-type domains are found at residues 55-85 and 95-124; these read LRRYPNGEERCIACKLCEAICPAQAITIDAE and TRYDIDMTKCIYCGFCQEACPVDAIVEGPN. Residues cysteine 65, cysteine 68, cysteine 71, cysteine 75, cysteine 104, cysteine 107, cysteine 110, and cysteine 114 each coordinate [4Fe-4S] cluster.

This sequence belongs to the complex I 23 kDa subunit family. As to quaternary structure, NDH-1 is composed of 14 different subunits. Subunits NuoA, H, J, K, L, M, N constitute the membrane sector of the complex. [4Fe-4S] cluster is required as a cofactor.

Its subcellular location is the cell inner membrane. It carries out the reaction a quinone + NADH + 5 H(+)(in) = a quinol + NAD(+) + 4 H(+)(out). Its function is as follows. NDH-1 shuttles electrons from NADH, via FMN and iron-sulfur (Fe-S) centers, to quinones in the respiratory chain. The immediate electron acceptor for the enzyme in this species is believed to be ubiquinone. Couples the redox reaction to proton translocation (for every two electrons transferred, four hydrogen ions are translocated across the cytoplasmic membrane), and thus conserves the redox energy in a proton gradient. The sequence is that of NADH-quinone oxidoreductase subunit I from Jannaschia sp. (strain CCS1).